The following is a 134-amino-acid chain: Ribosome-binding factor A (134 aa).

It belongs to the RbfA family. In terms of assembly, monomer. Binds 30S ribosomal subunits, but not 50S ribosomal subunits or 70S ribosomes.

Its subcellular location is the cytoplasm. In terms of biological role, one of several proteins that assist in the late maturation steps of the functional core of the 30S ribosomal subunit. Associates with free 30S ribosomal subunits (but not with 30S subunits that are part of 70S ribosomes or polysomes). Required for efficient processing of 16S rRNA. May interact with the 5'-terminal helix region of 16S rRNA. In Rhizobium leguminosarum bv. trifolii (strain WSM2304), this protein is Ribosome-binding factor A.